Reading from the N-terminus, the 692-residue chain is ATP-dependent RNA helicase MSS116, mitochondrial (692 aa).

The transit peptide at 1–37 (MMIARFGKQVLRKNVLVSNRIHFPVISRGFHNSFINK) directs the protein to the mitochondrion. Residues 82 to 113 (SQVTEQTELTKSEEEEKKKKNINTNTNKNDRK) are disordered. Basic and acidic residues predominate over residues 89 to 99 (ELTKSEEEEKK). Positions 130–158 (DFKNTGLIDDVILRALDRAHFKDLTPIQQ) match the Q motif motif. Residues 162–349 (VPLLETERGM…KQHINKKYDY (188 aa)) form the Helicase ATP-binding domain. 175–182 (AKTGTGKT) provides a ligand contact to ATP. A DEAD box motif is present at residues 290 to 293 (DEAD). The region spanning 384 to 534 (YVNQLVKDSP…QVHESSEIDN (151 aa)) is the Helicase C-terminal domain. Positions 643-692 (NRYSGGGGNRSEKRFSFAGRGGNSGGHSGRGRGGRSGYSGGRSSQYSDWE) are disordered. Over residues 661–670 (GRGGNSGGHS) the composition is skewed to gly residues.

Belongs to the DEAD box helicase family. DDX18/HAS1 subfamily.

Its subcellular location is the mitochondrion matrix. It carries out the reaction ATP + H2O = ADP + phosphate + H(+). In terms of biological role, ATP-dependent RNA helicase required for mitochondrial splicing of group I and II introns. Also required for efficient mitochondrial translation. The protein is ATP-dependent RNA helicase MSS116, mitochondrial (MSS116) of Lodderomyces elongisporus (strain ATCC 11503 / CBS 2605 / JCM 1781 / NBRC 1676 / NRRL YB-4239) (Yeast).